The primary structure comprises 387 residues: Putative transposase y4pF/y4sB (387 aa).

The protein belongs to the transposase 20 family.

The polypeptide is Putative transposase y4pF/y4sB (Sinorhizobium fredii (strain NBRC 101917 / NGR234)).